A 289-amino-acid chain; its full sequence is Ribosome-inactivating protein alpha-trichosanthin (289 aa).

An N-terminal signal peptide occupies residues 1 to 23 (MIRFLVLSLLILTLFLTTPAVEG). Glutamate 183 is an active-site residue. Positions 271–289 (AMDDDVPMTQSFGCGSYAI) are cleaved as a propeptide — removed in mature form.

It belongs to the ribosome-inactivating protein family. Type 1 RIP subfamily.

The catalysed reaction is Endohydrolysis of the N-glycosidic bond at one specific adenosine on the 28S rRNA.. Functionally, inactivates eukaryotic 60S ribosomal subunits. The sequence is that of Ribosome-inactivating protein alpha-trichosanthin from Trichosanthes kirilowii (Chinese snake gourd).